The following is a 98-amino-acid chain: Integration host factor subunit alpha (98 aa).

The interval 49–70 (FGNFDLRDKNQRPGRNPKTGED) is disordered.

It belongs to the bacterial histone-like protein family. Heterodimer of an alpha and a beta chain.

Functionally, this protein is one of the two subunits of integration host factor, a specific DNA-binding protein that functions in genetic recombination as well as in transcriptional and translational control. This Sodalis glossinidius (strain morsitans) protein is Integration host factor subunit alpha.